Reading from the N-terminus, the 82-residue chain is uncharacterized protein (82 aa).

The N-terminal stretch at 1–19 is a signal peptide; the sequence is MKNLLKILLIIAFANPVFA.

This is an uncharacterized protein from Rickettsia prowazekii (strain Madrid E).